A 693-amino-acid chain; its full sequence is Golgin subfamily A member 6D (693 aa).

Residues 14–611 are a coiled coil; sequence LEESRQNKLA…KLLELQELVL (598 aa). Disordered regions lie at residues 20 to 70, 497 to 547, and 662 to 693; these read NKLA…GDSQ, LPGE…GTEQ, and VEPAPGVAREGSPHNNPTVQQIVQLSPVMQDT. Residues 537 to 547 are compositionally biased toward basic and acidic residues; that stretch reads LPKEKADGTEQ. Polar residues predominate over residues 674–693; it reads PHNNPTVQQIVQLSPVMQDT.

This sequence belongs to the GOLGA6 family.

The sequence is that of Golgin subfamily A member 6D (GOLGA6D) from Homo sapiens (Human).